We begin with the raw amino-acid sequence, 92 residues long: Small ribosomal subunit protein bS18 (92 aa).

Belongs to the bacterial ribosomal protein bS18 family. Part of the 30S ribosomal subunit. Forms a tight heterodimer with protein bS6.

In terms of biological role, binds as a heterodimer with protein bS6 to the central domain of the 16S rRNA, where it helps stabilize the platform of the 30S subunit. The protein is Small ribosomal subunit protein bS18 of Cupriavidus taiwanensis (strain DSM 17343 / BCRC 17206 / CCUG 44338 / CIP 107171 / LMG 19424 / R1) (Ralstonia taiwanensis (strain LMG 19424)).